The chain runs to 438 residues: Aflatoxin cluster transcriptional coactivator aflS (438 aa).

The HTH iclR-type domain occupies 65-134 (LALYNQLLAC…PSPGHVAHSV (70 aa)). A DNA-binding region (H-T-H motif) is located at residues 95-114 (FEDVADIAGVPECRLRRLVR).

Interacts with aflR.

The protein resides in the nucleus. Transcription factor; part of the gene cluster that mediates the biosynthesis of aflatoxin, a polyketide-derived furanocoumarin which is part of the most toxic and carcinogenic compounds among the known mycotoxins. AflS exhibits no DNA-binding capability on its own, but forms a complex with the other aflatoxin cluster transcription factor aflR and acts as a modulator of aflR's DNA-binding by decreasing its DNA-binding affinity. This chain is Aflatoxin cluster transcriptional coactivator aflS, found in Aspergillus flavus (strain ATCC 200026 / FGSC A1120 / IAM 13836 / NRRL 3357 / JCM 12722 / SRRC 167).